The chain runs to 642 residues: 1-deoxy-D-xylulose-5-phosphate synthase 2 (642 aa).

Thiamine diphosphate-binding positions include histidine 73 and 113–115 (SHA). Residue aspartate 144 participates in Mg(2+) binding. Residues 145-146 (GA), asparagine 174, tyrosine 285, and glutamate 366 each bind thiamine diphosphate. Asparagine 174 contacts Mg(2+).

Belongs to the transketolase family. DXPS subfamily. As to quaternary structure, homodimer. Mg(2+) is required as a cofactor. It depends on thiamine diphosphate as a cofactor.

The catalysed reaction is D-glyceraldehyde 3-phosphate + pyruvate + H(+) = 1-deoxy-D-xylulose 5-phosphate + CO2. Its pathway is metabolic intermediate biosynthesis; 1-deoxy-D-xylulose 5-phosphate biosynthesis; 1-deoxy-D-xylulose 5-phosphate from D-glyceraldehyde 3-phosphate and pyruvate: step 1/1. Its function is as follows. Catalyzes the acyloin condensation reaction between C atoms 2 and 3 of pyruvate and glyceraldehyde 3-phosphate to yield 1-deoxy-D-xylulose-5-phosphate (DXP). This chain is 1-deoxy-D-xylulose-5-phosphate synthase 2, found in Streptomyces coelicolor (strain ATCC BAA-471 / A3(2) / M145).